Reading from the N-terminus, the 352-residue chain is Glycerol-1-phosphate dehydrogenase [NAD(P)+] (352 aa).

Residues 98 to 102 and 120 to 123 each bind NAD(+); these read GKPID and TAAS. Substrate is bound at residue Asp-125. Ser-129 is a binding site for NAD(+). Residue Asp-172 coordinates substrate. Residues Asp-172 and His-252 each coordinate Zn(2+). Residue His-256 coordinates substrate. A Zn(2+)-binding site is contributed by His-268.

Belongs to the glycerol-1-phosphate dehydrogenase family. Zn(2+) serves as cofactor.

It is found in the cytoplasm. It carries out the reaction sn-glycerol 1-phosphate + NAD(+) = dihydroxyacetone phosphate + NADH + H(+). It catalyses the reaction sn-glycerol 1-phosphate + NADP(+) = dihydroxyacetone phosphate + NADPH + H(+). It functions in the pathway membrane lipid metabolism; glycerophospholipid metabolism. Catalyzes the NAD(P)H-dependent reduction of dihydroxyacetonephosphate (DHAP or glycerone phosphate) to glycerol 1-phosphate (G1P). The G1P thus generated is used as the glycerophosphate backbone of phospholipids in the cellular membranes of Archaea. This Natronomonas pharaonis (strain ATCC 35678 / DSM 2160 / CIP 103997 / JCM 8858 / NBRC 14720 / NCIMB 2260 / Gabara) (Halobacterium pharaonis) protein is Glycerol-1-phosphate dehydrogenase [NAD(P)+].